A 353-amino-acid polypeptide reads, in one-letter code: Phospho-N-acetylmuramoyl-pentapeptide-transferase (353 aa).

Transmembrane regions (helical) follow at residues 22 to 42, 65 to 85, 88 to 108, 129 to 149, 161 to 181, 192 to 212, 228 to 248, 256 to 276, 281 to 301, and 330 to 350; these read FAFFIALCLSLFLMPKFITWA, TPTMGGLIFISSAVIASLFCI, DNIFAISALLCLILFCLIGLI, LLAQIIAGLICILPLYFSSEL, PLFDMEIFAIAFWILVLISSS, GLATVPGIFSLSTLGIFLYLS, GLGEVVIICAALIGALMGFLW, VFMGDSGSLALGGFIGFLAVI, ILLLLIGFVFVLETVSVILQV, and KIIVRFWMIALLSNLLALASI.

The protein belongs to the glycosyltransferase 4 family. MraY subfamily. Mg(2+) is required as a cofactor.

The protein localises to the cell inner membrane. It carries out the reaction UDP-N-acetyl-alpha-D-muramoyl-L-alanyl-gamma-D-glutamyl-meso-2,6-diaminopimeloyl-D-alanyl-D-alanine + di-trans,octa-cis-undecaprenyl phosphate = di-trans,octa-cis-undecaprenyl diphospho-N-acetyl-alpha-D-muramoyl-L-alanyl-D-glutamyl-meso-2,6-diaminopimeloyl-D-alanyl-D-alanine + UMP. It participates in cell wall biogenesis; peptidoglycan biosynthesis. Functionally, catalyzes the initial step of the lipid cycle reactions in the biosynthesis of the cell wall peptidoglycan: transfers peptidoglycan precursor phospho-MurNAc-pentapeptide from UDP-MurNAc-pentapeptide onto the lipid carrier undecaprenyl phosphate, yielding undecaprenyl-pyrophosphoryl-MurNAc-pentapeptide, known as lipid I. This Campylobacter jejuni subsp. jejuni serotype O:2 (strain ATCC 700819 / NCTC 11168) protein is Phospho-N-acetylmuramoyl-pentapeptide-transferase.